Reading from the N-terminus, the 529-residue chain is CTP synthase (529 aa).

The amidoligase domain stretch occupies residues 1–267; that stretch reads MKEAKFIFVT…DTQILEHFHL (267 aa). Ser15 serves as a coordination point for CTP. Ser15 contacts UTP. ATP contacts are provided by residues 16–21 and Asp73; that span reads SLGKGL. Mg(2+)-binding residues include Asp73 and Glu141. CTP-binding positions include 148–150, 188–193, and Lys224; these read DIE and KTKPTQ. UTP contacts are provided by residues 188-193 and Lys224; that span reads KTKPTQ. The Glutamine amidotransferase type-1 domain occupies 292-529; sequence TVSIVGKYTE…SFVKAAIDKK (238 aa). Gly354 is a binding site for L-glutamine. Cys381 serves as the catalytic Nucleophile; for glutamine hydrolysis. L-glutamine contacts are provided by residues 382–385, Glu405, and Arg459; that span reads LGMQ. Catalysis depends on residues His504 and Glu506.

It belongs to the CTP synthase family. Homotetramer.

It carries out the reaction UTP + L-glutamine + ATP + H2O = CTP + L-glutamate + ADP + phosphate + 2 H(+). It catalyses the reaction L-glutamine + H2O = L-glutamate + NH4(+). The catalysed reaction is UTP + NH4(+) + ATP = CTP + ADP + phosphate + 2 H(+). It functions in the pathway pyrimidine metabolism; CTP biosynthesis via de novo pathway; CTP from UDP: step 2/2. Its activity is regulated as follows. Allosterically activated by GTP, when glutamine is the substrate; GTP has no effect on the reaction when ammonia is the substrate. The allosteric effector GTP functions by stabilizing the protein conformation that binds the tetrahedral intermediate(s) formed during glutamine hydrolysis. Inhibited by the product CTP, via allosteric rather than competitive inhibition. Catalyzes the ATP-dependent amination of UTP to CTP with either L-glutamine or ammonia as the source of nitrogen. Regulates intracellular CTP levels through interactions with the four ribonucleotide triphosphates. This Wolbachia pipientis wMel protein is CTP synthase.